Reading from the N-terminus, the 189-residue chain is UPF0301 protein PputGB1_5045 (189 aa).

The protein belongs to the UPF0301 (AlgH) family.

In Pseudomonas putida (strain GB-1), this protein is UPF0301 protein PputGB1_5045.